The chain runs to 520 residues: GMP synthase [glutamine-hydrolyzing] (520 aa).

One can recognise a Glutamine amidotransferase type-1 domain in the interval 9–202; it reads TILIIDFGSQ…VHRIVGVKPG (194 aa). Cys-86 (nucleophile) is an active-site residue. Catalysis depends on residues His-176 and Glu-178. The region spanning 203–395 is the GMPS ATP-PPase domain; it reads WTMGAYREQA…LGLPDSFIGR (193 aa). 230–236 is an ATP binding site; it reads SGGVDSS.

In terms of assembly, homodimer.

The enzyme catalyses XMP + L-glutamine + ATP + H2O = GMP + L-glutamate + AMP + diphosphate + 2 H(+). It participates in purine metabolism; GMP biosynthesis; GMP from XMP (L-Gln route): step 1/1. Functionally, catalyzes the synthesis of GMP from XMP. This Brucella melitensis biotype 2 (strain ATCC 23457) protein is GMP synthase [glutamine-hydrolyzing].